The chain runs to 434 residues: Eukaryotic translation initiation factor 3 subunit E-1 (434 aa).

The PCI domain maps to phenylalanine 219 to leucine 392.

The protein belongs to the eIF-3 subunit E family. In terms of assembly, component of the eukaryotic translation initiation factor 3 (eIF-3) complex. The eIF-3 complex interacts with pix. Interacts with mxt.

It is found in the cytoplasm. In terms of biological role, component of the eukaryotic translation initiation factor 3 (eIF-3) complex, which is involved in protein synthesis of a specialized repertoire of mRNAs and, together with other initiation factors, stimulates binding of mRNA and methionyl-tRNAi to the 40S ribosome. The eIF-3 complex specifically targets and initiates translation of a subset of mRNAs involved in cell proliferation. This is Eukaryotic translation initiation factor 3 subunit E-1 (eIF3-S6-1) from Drosophila willistoni (Fruit fly).